Consider the following 543-residue polypeptide: Intermediate filament protein ifb-2 (543 aa).

A compositionally biased stretch (polar residues) spans 1-10 (MSAVSYSMHR). A disordered region spans residues 1–27 (MSAVSYSMHRTTTTTSSSSHGGVSAGH). Residues 1–42 (MSAVSYSMHRTTTTTSSSSHGGVSAGHAAEEFVASAEREKQE) form a head region. Residues 39 to 388 (EKQEMQQLNS…KLVESEEGRF (350 aa)) form the IF rod domain. The segment at 43 to 74 (MQQLNSRLEVYISRVRQLEDRNKELVIELDTL) is coil 1A. Residues 75 to 88 (RGSLGNDIGQIKFK) form a linker 1 region. A coil 1B region spans residues 89-223 (FNDSLVKVRR…RIHSQEITEL (135 aa)). The linker 12 stretch occupies residues 224–240 (RTLLAQAPADTREFFKN). Positions 241–387 (ELALAIREIK…RKLVESEEGR (147 aa)) are coil 2. Residues 388–542 (FTHVGQGVVV…SHIQTTVASS (155 aa)) form a tail region. Residues 420-538 (TRSSFKRHAK…IEKASHIQTT (119 aa)) form the LTD domain.

Belongs to the intermediate filament family. Expression is restricted to a discrete circumferential subapical layer within the intestinal terminal web (known as the 'endotube'); this layer joins directly to the apical junction complexes that connect adjacent gut cells.

The protein resides in the cytoplasm. Cytoplasmic intermediate filaments provide mechanical strength to cells. Not essential protein. Component of the terminal web (organelle-depleted, intermediate filament-rich layer of cytoplasm that underlies the apical microvilli of polarized epithelial cells) in embryonic through to adult gut cells. Correct localization of filaments requires let-413. In Caenorhabditis elegans, this protein is Intermediate filament protein ifb-2 (ifb-2).